Consider the following 33-residue polypeptide: Brevinin-2DYb (33 aa).

An intrachain disulfide couples C27 to C33.

In terms of tissue distribution, expressed by the skin glands.

It localises to the secreted. Functionally, antimicrobial peptide. Active against the Gram-positive bacterium S.aureus (MIC=30 uM) and the Gram-negative bacterium E.coli (MIC=30 uM). This is Brevinin-2DYb from Rana dybowskii (Dybovsky's frog).